Consider the following 131-residue polypeptide: Small ribosomal subunit protein uS11 (131 aa).

It belongs to the universal ribosomal protein uS11 family. Part of the 30S ribosomal subunit. Interacts with proteins S7 and S18. Binds to IF-3.

Its function is as follows. Located on the platform of the 30S subunit, it bridges several disparate RNA helices of the 16S rRNA. Forms part of the Shine-Dalgarno cleft in the 70S ribosome. The sequence is that of Small ribosomal subunit protein uS11 from Granulibacter bethesdensis (strain ATCC BAA-1260 / CGDNIH1).